Here is a 187-residue protein sequence, read N- to C-terminus: Interferon beta (187 aa).

The first 21 residues, 1 to 21 (MTNKCLLQIALLLCFSTTALS), serve as a signal peptide directing secretion. Residue Y24 is modified to Phosphotyrosine. An intrachain disulfide couples C52 to C162. Residue N101 is glycosylated (N-linked (GlcNAc...) asparagine).

Belongs to the alpha/beta interferon family. In terms of assembly, monomer.

Its subcellular location is the secreted. Functionally, type I interferon cytokine that plays a key role in the innate immune response to infection, developing tumors and other inflammatory stimuli. Signals via binding to high-affinity (IFNAR2) and low-affinity (IFNAR1) heterodimeric receptor, activating the canonical Jak-STAT signaling pathway resulting in transcriptional activation or repression of interferon-regulated genes that encode the effectors of the interferon response, such as antiviral proteins, regulators of cell proliferation and differentiation, and immunoregulatory proteins. Signals mostly via binding to a IFNAR1-IFNAR2 heterodimeric receptor, but can also function with IFNAR1 alone and independently of Jak-STAT pathways. Elicits a wide variety of responses, including antiviral and antibacterial activities, and can regulate the development of B-cells, myelopoiesis and lipopolysaccharide (LPS)-inducible production of tumor necrosis factor. Plays a role in neuronal homeostasis by regulating dopamine turnover and protecting dopaminergic neurons: acts by promoting neuronal autophagy and alpha-synuclein clearance, thereby preventing dopaminergic neuron loss. IFNB1 is more potent than interferon-alpha (IFN-alpha) in inducing the apoptotic and antiproliferative pathways required for control of tumor cell growth. The chain is Interferon beta (IFNB1) from Macaca fascicularis (Crab-eating macaque).